The primary structure comprises 216 residues: Cytochrome c biogenesis ATP-binding export protein CcmA (216 aa).

Positions 11–216 (VSASKLTCIR…RKIRLDYRFV (206 aa)) constitute an ABC transporter domain. 43 to 50 (GPNGAGKT) contacts ATP.

This sequence belongs to the ABC transporter superfamily. CcmA exporter (TC 3.A.1.107) family. In terms of assembly, the complex is composed of two ATP-binding proteins (CcmA) and two transmembrane proteins (CcmB).

It is found in the cell inner membrane. It carries out the reaction heme b(in) + ATP + H2O = heme b(out) + ADP + phosphate + H(+). Its function is as follows. Part of the ABC transporter complex CcmAB involved in the biogenesis of c-type cytochromes; once thought to export heme, this seems not to be the case, but its exact role is uncertain. Responsible for energy coupling to the transport system. The chain is Cytochrome c biogenesis ATP-binding export protein CcmA from Shewanella sp. (strain MR-4).